The following is a 68-amino-acid chain: Conotoxin Cal14.13a (68 aa).

The first 21 residues, 1–21 (MKLCVVIVLLMLAMPFNGGEA), serve as a signal peptide directing secretion. Positions 22-38 (SRFFNQHARSQRSGMKT) are excised as a propeptide. Valine amide is present on Val-66.

In terms of processing, contains 2 disulfide bonds. Expressed by the venom duct.

Its subcellular location is the secreted. In terms of biological role, probable neurotoxin with unknown target. Possibly targets ion channels. The polypeptide is Conotoxin Cal14.13a (Californiconus californicus (California cone)).